We begin with the raw amino-acid sequence, 118 residues long: Large ribosomal subunit protein eL18 (118 aa).

Belongs to the eukaryotic ribosomal protein eL18 family.

The protein is Large ribosomal subunit protein eL18 of Sulfurisphaera tokodaii (strain DSM 16993 / JCM 10545 / NBRC 100140 / 7) (Sulfolobus tokodaii).